Here is a 330-residue protein sequence, read N- to C-terminus: DNA-directed RNA polymerase subunit alpha (330 aa).

An alpha N-terminal domain (alpha-NTD) region spans residues 1 to 232; it reads MAILAFQKPE…SHFSLFAENK (232 aa). The alpha C-terminal domain (alpha-CTD) stretch occupies residues 248–330; sequence EDSLHMRQLL…DISKYKLDKD (83 aa).

This sequence belongs to the RNA polymerase alpha chain family. Homodimer. The RNAP catalytic core consists of 2 alpha, 1 beta, 1 beta' and 1 omega subunit. When a sigma factor is associated with the core the holoenzyme is formed, which can initiate transcription.

The catalysed reaction is RNA(n) + a ribonucleoside 5'-triphosphate = RNA(n+1) + diphosphate. Functionally, DNA-dependent RNA polymerase catalyzes the transcription of DNA into RNA using the four ribonucleoside triphosphates as substrates. This chain is DNA-directed RNA polymerase subunit alpha, found in Porphyromonas gingivalis (strain ATCC BAA-308 / W83).